Here is a 74-residue protein sequence, read N- to C-terminus: Auswaprin-a (74 aa).

A signal peptide spans methionine 1–serine 24. Positions arginine 27–isoleucine 71 constitute a WAP domain. 4 cysteine pairs are disulfide-bonded: cysteine 34–cysteine 59, cysteine 42–cysteine 63, cysteine 46–cysteine 58, and cysteine 52–cysteine 67.

The protein belongs to the venom waprin family. In terms of tissue distribution, expressed by the venom gland.

The protein localises to the secreted. Its function is as follows. Damages membranes of susceptible bacteria. Has no hemolytic activity. Not toxic to mice. Does not inhibit the proteinases elastase and cathepsin G. The sequence is that of Auswaprin-a from Pseudechis australis (Mulga snake).